The chain runs to 651 residues: Probable potassium transport system protein Kup (651 aa).

A run of 12 helical transmembrane segments spans residues 41-61, 82-102, 130-150, 163-183, 194-214, 235-255, 276-296, 309-329, 366-386, 395-415, 426-446, and 450-470; these read LVLGALGVVYGDIGTSPIYAF, VVSLIFWALTLVVTVKYVLFV, LILGVGICGAALFFGDAVITP, IVAPNLTPFVVPATVVILVTL, VAIVFGPIMALWFVALGASGL, FLTVSPAVAFVTVGAVFLAMT, WLWIVFPCLLLNYFGQAAFIL, MIPSFALWPMVLLATAATVIA, IYIPRVNLLLGLAVVILVLGF, AYGIAVTGNMLVTTVLLYIVM, ALPIILGFLVIDMLFFSANII, and EGGWASIGIATVLVLIMWTWV.

Belongs to the HAK/KUP transporter (TC 2.A.72) family.

Its subcellular location is the cell inner membrane. It catalyses the reaction K(+)(in) + H(+)(in) = K(+)(out) + H(+)(out). Transport of potassium into the cell. Likely operates as a K(+):H(+) symporter. The protein is Probable potassium transport system protein Kup of Brucella melitensis biotype 2 (strain ATCC 23457).